The following is a 467-amino-acid chain: NADH-quinone oxidoreductase subunit N 2 (467 aa).

The next 13 helical transmembrane spans lie at 1–21 (MSIF…ALFV), 31–51 (VASW…FALG), 66–86 (LSQF…GIAA), 99–119 (FMLL…VELI), 153–173 (ILFG…IIAA), 195–215 (AVIG…LFPF), 231–253 (AAYV…AAFV), 258–280 (EVTT…AALV), 287–307 (LLGF…AAGS), 315–335 (AFYS…VCAI), 357–377 (LAMI…TAGF), 394–414 (WLVI…LSMV), and 434–454 (LIFG…PAPL).

This sequence belongs to the complex I subunit 2 family. NDH-1 is composed of 14 different subunits. Subunits NuoA, H, J, K, L, M, N constitute the membrane sector of the complex.

Its subcellular location is the cell inner membrane. It catalyses the reaction a quinone + NADH + 5 H(+)(in) = a quinol + NAD(+) + 4 H(+)(out). In terms of biological role, NDH-1 shuttles electrons from NADH, via FMN and iron-sulfur (Fe-S) centers, to quinones in the respiratory chain. The immediate electron acceptor for the enzyme in this species is believed to be ubiquinone. Couples the redox reaction to proton translocation (for every two electrons transferred, four hydrogen ions are translocated across the cytoplasmic membrane), and thus conserves the redox energy in a proton gradient. The chain is NADH-quinone oxidoreductase subunit N 2 from Solidesulfovibrio magneticus (strain ATCC 700980 / DSM 13731 / RS-1) (Desulfovibrio magneticus).